A 436-amino-acid chain; its full sequence is MNALVRRCVARAGLPCIWRGKCYSSGNEPAESNQVTPMLRHLMYKIKSTGPITVAEYMKEVLTNPAKGYYVHQDMLGEKGDFITSPEISQIFGELLGVWFVSEWIASGKSPAFQLVELGPGRGTLTADILRVFSQLGSVLKTCAISIHLVEVSQKLSEIQALTLAEEKVPLERDAESLVYMKGVTKSGIPVSWYRDLKDVPEGYSLYLAHEFFDVLPVHKFQKTPRGWREVFVDVDPQASDKLRFVLAPCATPAEAFIQRDERREHVEVCPDAGVIIQELSQRIASTGGAALIADYGHDGTKTDTLRGFYGHQLHDVLIAPGTADLTADVDFSYLRRMAQGKVASLGPVEQRTFLKNMGIDVRLKVLLDKAGEPSAKQQLLGGYDMLMNPQKMGERFHFFALLPHQRLHGGSQERNACQSKTPSSSVAGFDELVWQ.

A mitochondrion-targeting transit peptide spans 1–41 (MNALVRRCVARAGLPCIWRGKCYSSGNEPAESNQVTPMLRH). The disordered stretch occupies residues 411-436 (GSQERNACQSKTPSSSVAGFDELVWQ). Positions 413–427 (QERNACQSKTPSSSV) are enriched in polar residues.

It belongs to the NDUFAF7 family. Interacts with NDUFS2.

It localises to the mitochondrion. It catalyses the reaction L-arginyl-[protein] + 2 S-adenosyl-L-methionine = N(omega),N(omega)'-dimethyl-L-arginyl-[protein] + 2 S-adenosyl-L-homocysteine + 2 H(+). Its function is as follows. Arginine methyltransferase involved in the assembly or stability of mitochondrial NADH:ubiquinone oxidoreductase complex (complex I). Acts by mediating symmetric dimethylation of 'Arg-118' of NDUFS2 after it assembles into the complex I, stabilizing the early intermediate complex. This Mus musculus (Mouse) protein is Protein arginine methyltransferase NDUFAF7, mitochondrial.